A 125-amino-acid chain; its full sequence is Small ribosomal subunit protein eS8 (125 aa).

It belongs to the eukaryotic ribosomal protein eS8 family. In terms of assembly, part of the 30S ribosomal subunit.

The sequence is that of Small ribosomal subunit protein eS8 from Methanocella arvoryzae (strain DSM 22066 / NBRC 105507 / MRE50).